The primary structure comprises 437 residues: MPVMGCSVCSAFAELSRWAHGYPGGQTDAVAIEGDLWQLNLQILDVLEIDHASFVNFVFLGKGLTCIPWGTRGEFFTSWIQGLLERCSCPSVDIHKQLFYYGIYMCYFLTVYLLLYPSPVIIKYARSFFRGEQLWHLLCKFEWVIEKFMEYVFKINFNHPVIKINEGDLESYMFLRKKLKRQYLTPQLAVPPLFTRLPPSLQFIDEGHTHLDTHGEALASALKSCCEDVPCGSPFDSMVKNLALRCALSHQFSVIPVSDQSPNIVTQIREKILSISVLACVVRVPILSATVWSLVETKRPTFFVYCGECKHCLNFGKGKFLKVNFNPTHAFYCRDQKEKQCNVCATTGRIYCSFCGSADIHTASLTQMLDGVPIIRAVMANNAAFMLDTAQRSVDFILPCLGTHAKCEGSVLRRLSLLQLLYLTLNASELMCARCQS.

Transmembrane regions (helical) follow at residues 102-122 and 272-292; these read GIYM…PVII and ILSI…ATVW.

Belongs to the herpesviridae UL49 family.

The protein localises to the host membrane. This is an uncharacterized protein from Connochaetes taurinus (Blue wildebeest).